The chain runs to 204 residues: uncharacterized protein (204 aa).

An N-terminal signal peptide occupies residues 1 to 24; sequence MPINTFCKISLFICALFCSTVTLA.

This is an uncharacterized protein from Pasteurella multocida (strain Pm70).